Consider the following 523-residue polypeptide: Spastin (523 aa).

Topologically, residues 1–41 (MLDKLSKHKTMFYERVKEIDQILFSQQQAKQTQLDNLSNNN) are cytoplasmic. Positions 42–58 (ASGGFFSGFMKMFSPLS) form an intramembrane region, helical. Low complexity-rich tracts occupy residues 57-71 (LSTP…NSNT), 171-184 (QQPP…QQQP), and 193-210 (TALR…TANN). 2 disordered regions span residues 57–77 (LSTP…AISQ) and 129–218 (GISS…LDQI). Over 59–523 (TPPNSSSNNN…ESYGTFAKGI (465 aa)) the chain is Cytoplasmic.

The protein belongs to the AAA ATPase family. Spastin subfamily. In terms of assembly, homohexamer. The homohexamer is stabilized by ATP-binding. The homohexamer may adopt a ring conformation through which microtubules pass prior to being severed.

Its subcellular location is the membrane. It carries out the reaction n ATP + n H2O + a microtubule = n ADP + n phosphate + (n+1) alpha/beta tubulin heterodimers.. In terms of biological role, ATP-dependent microtubule severing protein. Stimulates microtubule minus-end depolymerization and poleward microtubule flux in the mitotic spindle. The polypeptide is Spastin (Naegleria gruberi (Amoeba)).